Here is a 153-residue protein sequence, read N- to C-terminus: UPF0102 protein Pnap_0271 (153 aa).

This sequence belongs to the UPF0102 family.

This chain is UPF0102 protein Pnap_0271, found in Polaromonas naphthalenivorans (strain CJ2).